The sequence spans 220 residues: Cytidylate kinase (220 aa).

9-17 (GPAASGKST) serves as a coordination point for ATP.

This sequence belongs to the cytidylate kinase family. Type 1 subfamily.

It localises to the cytoplasm. The catalysed reaction is CMP + ATP = CDP + ADP. The enzyme catalyses dCMP + ATP = dCDP + ADP. The protein is Cytidylate kinase of Thermotoga neapolitana (strain ATCC 49049 / DSM 4359 / NBRC 107923 / NS-E).